The sequence spans 208 residues: MFVSTAFAQTATESQPASTAGEHGAADAVHTETGVAHDAGHGSGVFPPFDSTHYASQVLWLAITFGLFYLFLSRVVLPRIGGVIETRRDRIAQDLEQAARLKQDADNAIAAYEQELAQARSKAASIAEAAREKGKGEADAERASAEAVLESKLKEAEERIAAIKAKAMSDVGNIAEETTATIVEQLLGLTADKASVSEAVKAIRASNA.

Residues 1–18 (MFVSTAFAQTATESQPAS) show a composition bias toward polar residues. Residues 1–26 (MFVSTAFAQTATESQPASTAGEHGAA) form a disordered region. A helical transmembrane segment spans residues 56-78 (SQVLWLAITFGLFYLFLSRVVLP).

It belongs to the ATPase B chain family. F-type ATPases have 2 components, F(1) - the catalytic core - and F(0) - the membrane proton channel. F(1) has five subunits: alpha(3), beta(3), gamma(1), delta(1), epsilon(1). F(0) has three main subunits: a(1), b(2) and c(10-14). The alpha and beta chains form an alternating ring which encloses part of the gamma chain. F(1) is attached to F(0) by a central stalk formed by the gamma and epsilon chains, while a peripheral stalk is formed by the delta and b chains.

The protein localises to the cell inner membrane. Its function is as follows. F(1)F(0) ATP synthase produces ATP from ADP in the presence of a proton or sodium gradient. F-type ATPases consist of two structural domains, F(1) containing the extramembraneous catalytic core and F(0) containing the membrane proton channel, linked together by a central stalk and a peripheral stalk. During catalysis, ATP synthesis in the catalytic domain of F(1) is coupled via a rotary mechanism of the central stalk subunits to proton translocation. Functionally, component of the F(0) channel, it forms part of the peripheral stalk, linking F(1) to F(0). In Brucella abortus (strain 2308), this protein is ATP synthase subunit b 1.